The sequence spans 345 residues: D-alanine--D-alanine ligase (345 aa).

In terms of domain architecture, ATP-grasp spans 137-342 (KAAFSAAGLP…LEELVHQLLE (206 aa)). 169-224 (ETQLGYPCFIKPANLGSSVGISKATNRSELQAGLDLAASHDSRLLVEKGLQVRELE) provides a ligand contact to ATP. Mg(2+) contacts are provided by Asp295, Glu309, and Asn311.

It belongs to the D-alanine--D-alanine ligase family. Mg(2+) serves as cofactor. It depends on Mn(2+) as a cofactor.

The protein localises to the cytoplasm. The catalysed reaction is 2 D-alanine + ATP = D-alanyl-D-alanine + ADP + phosphate + H(+). It participates in cell wall biogenesis; peptidoglycan biosynthesis. In terms of biological role, cell wall formation. This chain is D-alanine--D-alanine ligase, found in Synechococcus sp. (strain RCC307).